Reading from the N-terminus, the 157-residue chain is Probable succinate transporter subunit YjjB (157 aa).

4 helical membrane passes run 8–28 (FALA…AMVF), 57–77 (LNIE…GIQW), 87–107 (VFTV…TAMI), and 129–149 (FLTA…PGLW).

The protein belongs to the ThrE exporter (TC 2.A.79) family. As to quaternary structure, the transporter is composed of YjjB and YjjP.

Its subcellular location is the cell inner membrane. Involved in succinate export with YjjP. Both proteins are required for export. The polypeptide is Probable succinate transporter subunit YjjB (Shigella boydii serotype 4 (strain Sb227)).